We begin with the raw amino-acid sequence, 576 residues long: Arginine--tRNA ligase (576 aa).

Residues 126–136 carry the 'HIGH' region motif; that stretch reads ANPTGPMHIGH.

This sequence belongs to the class-I aminoacyl-tRNA synthetase family. In terms of assembly, monomer.

It localises to the cytoplasm. It catalyses the reaction tRNA(Arg) + L-arginine + ATP = L-arginyl-tRNA(Arg) + AMP + diphosphate. The chain is Arginine--tRNA ligase from Rickettsia akari (strain Hartford).